The primary structure comprises 447 residues: DNA primase DnaG (447 aa).

The region spanning 200 to 274 (DSIIVVEGRA…DIDYVARAPE (75 aa)) is the Toprim domain. Glu206, Asp248, and Asp250 together coordinate Mg(2+).

This sequence belongs to the archaeal DnaG primase family. As to quaternary structure, forms a ternary complex with MCM helicase and DNA. Component of the archaeal exosome complex. Requires Mg(2+) as cofactor.

The enzyme catalyses ssDNA + n NTP = ssDNA/pppN(pN)n-1 hybrid + (n-1) diphosphate.. RNA polymerase that catalyzes the synthesis of short RNA molecules used as primers for DNA polymerase during DNA replication. Also part of the exosome, which is a complex involved in RNA degradation. Acts as a poly(A)-binding protein that enhances the interaction between heteromeric, adenine-rich transcripts and the exosome. In Pyrococcus abyssi (strain GE5 / Orsay), this protein is DNA primase DnaG.